The sequence spans 131 residues: Small ribosomal subunit protein uS8 (131 aa).

The protein belongs to the universal ribosomal protein uS8 family. Part of the 30S ribosomal subunit. Contacts proteins S5 and S12.

Its function is as follows. One of the primary rRNA binding proteins, it binds directly to 16S rRNA central domain where it helps coordinate assembly of the platform of the 30S subunit. The chain is Small ribosomal subunit protein uS8 from Helicobacter acinonychis (strain Sheeba).